We begin with the raw amino-acid sequence, 306 residues long: Tyrosine recombinase XerC (306 aa).

The 85-residue stretch at 1-85 (MQQQLEQFLA…AIKSFFEYLQ (85 aa)) folds into the Core-binding (CB) domain. The Tyr recombinase domain maps to 106–289 (FLPKAITVAQ…SNDRAVKYDQ (184 aa)). Residues Arg-147, Lys-171, His-241, Arg-244, and His-267 contribute to the active site. Tyr-276 acts as the O-(3'-phospho-DNA)-tyrosine intermediate in catalysis.

It belongs to the 'phage' integrase family. XerC subfamily. In terms of assembly, forms a cyclic heterotetrameric complex composed of two molecules of XerC and two molecules of XerD.

It is found in the cytoplasm. Site-specific tyrosine recombinase, which acts by catalyzing the cutting and rejoining of the recombining DNA molecules. The XerC-XerD complex is essential to convert dimers of the bacterial chromosome into monomers to permit their segregation at cell division. It also contributes to the segregational stability of plasmids. This Herpetosiphon aurantiacus (strain ATCC 23779 / DSM 785 / 114-95) protein is Tyrosine recombinase XerC.